Consider the following 258-residue polypeptide: Phosphate import ATP-binding protein PstB (258 aa).

In terms of domain architecture, ABC transporter spans 5–247 (LDLKDVNIYY…EKIFSNPRQK (243 aa)). 37–44 (GPSGCGKS) contacts ATP.

This sequence belongs to the ABC transporter superfamily. Phosphate importer (TC 3.A.1.7) family. In terms of assembly, the complex is composed of two ATP-binding proteins (PstB), two transmembrane proteins (PstC and PstA) and a solute-binding protein (PstS).

It is found in the cell membrane. It carries out the reaction phosphate(out) + ATP + H2O = ADP + 2 phosphate(in) + H(+). Part of the ABC transporter complex PstSACB involved in phosphate import. Responsible for energy coupling to the transport system. The sequence is that of Phosphate import ATP-binding protein PstB from Mycolicibacterium smegmatis (Mycobacterium smegmatis).